An 874-amino-acid chain; its full sequence is Protein Son (874 aa).

3 disordered regions span residues 1 to 45 (MTEN…ERPD), 68 to 98 (RRSN…NIKP), and 120 to 368 (ELLD…SRDL). A compositionally biased stretch (polar residues) spans 12–24 (ETPQVAGSQTNPP). Positions 70-89 (SNSNELGNNDESGESESSAS) are enriched in low complexity. Basic residues-rich tracts occupy residues 128–147 (KKKK…KKKT) and 162–175 (KHKH…HKDI). 2 stretches are compositionally biased toward basic and acidic residues: residues 176–219 (RVKD…KDKF) and 226–277 (SEKE…ERVR). Residues 705–751 (TGGMGMALLQKMGWKPGEGLGRCKTGSLQPLLLDVKLDKRGLVSRDD) enclose the G-patch domain. Residues 800 to 870 (HPVCVLNELT…AALCLRSLGI (71 aa)) form the DRBM domain.

In terms of tissue distribution, expressed in ovarian nurse cells (at protein level).

The protein localises to the nucleus. Its function is as follows. RNA-binding protein that protects nascent transcripts containing intronic transposable sequences, known as INE-1, from being degraded by DIP1. Modulates DIP1 activity by repressing its sumoylation levels. This ensures that intronic sequences will be degradated only after splicing. In the ovaries, regulates germline stem cells (GSCs) self-renewal by repressing the expression of the GSC differentiation-promoting factor Rga. This is Protein Son from Drosophila melanogaster (Fruit fly).